A 207-amino-acid chain; its full sequence is Serotype 2 fimbrial subunit (207 aa).

An N-terminal signal peptide occupies residues 1–26 (MQIPFQRALRLCLRAALAAIASAAHA). The cysteines at positions 42 and 85 are disulfide-linked.

The protein belongs to the fimbrial protein family.

The protein localises to the fimbrium. In terms of biological role, bordetella pertussis is the causative agent of whooping cough. An essential step in the disease process is the attachment of the bacteria to the ciliated epithelium of the respiratory tract, enabling the organism to resist normal host-clearance mechanisms. It is unclear which bacterial cell surface component are responsible for adherence but the fimbriae of B.pertussis are prime candidates for being involved in this process. This Bordetella pertussis (strain Tohama I / ATCC BAA-589 / NCTC 13251) protein is Serotype 2 fimbrial subunit (fim2).